The primary structure comprises 533 residues: Undecaprenyl phosphate-alpha-4-amino-4-deoxy-L-arabinose arabinosyl transferase (533 aa).

13 helical membrane passes run 10 to 30 (LLLAAFLLAYLLPLGFHGLWI), 64 to 84 (PAGYWLIALGQAVFGENLFGV), 86 to 106 (IASAISTGLSVLLAYLLAGKI), 113 to 133 (SFASALLFMSFGFVAGQAGYS), 137 to 157 (PQFTLWTNLTLVAFWYAVHSI), 170 to 190 (VACGMGFMTKGFLAWALPAII), 207 to 227 (FGPLAVVIAIAVCLPWALAVH), 257 to 277 (WWFYLPLLIAACLPWALLLPV), 290 to 310 (DTAFLLLWLVLPLAFLSLSKG), 312 to 332 (LPTYILPCLLPLALLMADALV), 345 to 365 (VNGIVNAALTFLGLLALIYVQ), 377 to 397 (HLLLAVIVLTGWTLTNALQGI), and 402 to 422 (FWALPAVGSWLLIVLLPAALP).

It belongs to the glycosyltransferase 83 family.

It is found in the cell inner membrane. It catalyses the reaction 4-amino-4-deoxy-alpha-L-arabinopyranosyl di-trans,octa-cis-undecaprenyl phosphate + lipid IVA = lipid IIA + di-trans,octa-cis-undecaprenyl phosphate.. Its pathway is lipopolysaccharide metabolism; 4-amino-4-deoxy-beta-L-arabinose-lipid A biosynthesis. Functionally, catalyzes the transfer of the L-Ara4N moiety of the glycolipid undecaprenyl phosphate-alpha-L-Ara4N to lipid A. The modified arabinose is attached to lipid A and is required for resistance to polymyxin and cationic antimicrobial peptides. In Pseudomonas savastanoi pv. phaseolicola (strain 1448A / Race 6) (Pseudomonas syringae pv. phaseolicola (strain 1448A / Race 6)), this protein is Undecaprenyl phosphate-alpha-4-amino-4-deoxy-L-arabinose arabinosyl transferase.